Reading from the N-terminus, the 803-residue chain is Leucine--tRNA ligase (803 aa).

The 'HIGH' region signature appears at 40-51; it reads PYPSGAGLHVGH. The 'KMSKS' region signature appears at 575–579; that stretch reads KMSKS. Position 578 (Lys578) interacts with ATP.

This sequence belongs to the class-I aminoacyl-tRNA synthetase family.

It is found in the cytoplasm. The enzyme catalyses tRNA(Leu) + L-leucine + ATP = L-leucyl-tRNA(Leu) + AMP + diphosphate. This is Leucine--tRNA ligase from Listeria innocua serovar 6a (strain ATCC BAA-680 / CLIP 11262).